The following is a 311-amino-acid chain: L-lactate dehydrogenase (311 aa).

NAD(+)-binding positions include V12, D33, K38, Y63, and 77 to 78; that span reads GA. 2 residues coordinate substrate: Q80 and R86. NAD(+)-binding positions include S99, 116-118, and S141; that span reads VTN. Residue 118–121 coordinates substrate; the sequence is NPVD. 146-149 contacts substrate; the sequence is DSSR. The beta-D-fructose 1,6-bisphosphate site is built by R151 and H166. H173 (proton acceptor) is an active-site residue. Y219 is subject to Phosphotyrosine. T228 contacts substrate.

Belongs to the LDH/MDH superfamily. LDH family. In terms of assembly, homotetramer.

Its subcellular location is the cytoplasm. The catalysed reaction is (S)-lactate + NAD(+) = pyruvate + NADH + H(+). It participates in fermentation; pyruvate fermentation to lactate; (S)-lactate from pyruvate: step 1/1. With respect to regulation, allosterically activated by fructose 1,6-bisphosphate (FBP). In terms of biological role, catalyzes the conversion of lactate to pyruvate. The polypeptide is L-lactate dehydrogenase (Thermoanaerobacterium saccharolyticum (strain DSM 8691 / JW/SL-YS485)).